Here is an 89-residue protein sequence, read N- to C-terminus: Putative defensin-like protein 254 (89 aa).

The first 20 residues, 1 to 20 (MHNISFKLLLLCDLFLSSSS), serve as a signal peptide directing secretion. Intrachain disulfides connect Cys-31–Cys-48 and Cys-37–Cys-55.

This sequence belongs to the DEFL family.

It is found in the secreted. In Arabidopsis thaliana (Mouse-ear cress), this protein is Putative defensin-like protein 254.